Consider the following 678-residue polypeptide: MINKGKSWRLATVAAALMMAGSAWATEYSASFKNADIEEFINTVGKNLSKTIIIEPSVRGKINVRSYDLLNEEQYYQFFLSVLDVYGFAVVPMDNGVLKVVRSKDAKTSAIPVVDETNPGIGDEMVTRVVPVRNVSVRELAPLLRQLNDNAGGGNVVHYDPSNVLLITGRAAVVNRLVEVVRRVDKAGDQEVDIIKLRYASAGEMVRLVTNLNKDGNTQGGNTSLLLAPKVVADERTNSVVVSGEPKARARIIQMVRQLDRDLQSQGNTRVFYLKYGKAKDMVEVLKGVSTSIEADKKGGGTTAGGGNASIGGGKLAISADETTNALVITAQPDVMAELEQVVAKLDIRRAQVLVEAIIVEIADGDGLNLGVQWANTNGGGTQFTDTNLPIGSVAIAAKDYNENGTTTGLADLAKGFNGMAAGFYHGNWAALVTALSTSTKSDILSTPSIVTMDNKEASFNVGQEVPVQSGSQSSTTSDQVFNTIERKTVGTKLTVTPQINEGDSVLLNIEQEVSSVAQKQATGTADLGPTFDTRTIKNAVLVKSGETVVLGGLMDEQTQEKVSKVPLLGDIPVLGYLFRSTNNTTSKRNLMVFIRPTILRDAHVYSGISSNKYTMFRAEQLDAAAQESYLTSPKRQVLPEYGQDVAQSPEVQKQIELMKARQQATADGAQPFVQGNK.

Residues methionine 1–alanine 25 form the signal peptide. The segment at threonine 26–glycine 122 is N0. Residues glutamate 124–glycine 188 form an N1 region. Positions aspartate 189 to glutamine 264 are N2. Positions glycine 267–aspartate 347 are N3. The tract at residues glutamine 352–aspartate 602 is secretin. A s domain region spans residues histidine 604–lysine 678.

Belongs to the bacterial secretin family. GSP D subfamily. In terms of assembly, forms a cylindrical channel with 15 subunits.

It localises to the cell outer membrane. Involved in a type II secretion system (T2SS, formerly general secretion pathway, GSP) for the export of proteins. This subunit forms the outer membrane channel. The polypeptide is Secretin ExeD (exeD) (Aeromonas salmonicida).